We begin with the raw amino-acid sequence, 315 residues long: Type II methyltransferase M.Bsp6I (315 aa).

An SAM-dependent MTase C5-type domain is found at 2–315 (LQIASLFAGV…IAENIYKSML (314 aa)). Residue Cys73 is part of the active site.

This sequence belongs to the class I-like SAM-binding methyltransferase superfamily. C5-methyltransferase family.

It carries out the reaction a 2'-deoxycytidine in DNA + S-adenosyl-L-methionine = a 5-methyl-2'-deoxycytidine in DNA + S-adenosyl-L-homocysteine + H(+). Its function is as follows. A methylase that recognizes the double-stranded sequence 5'-GCNGC-3', methylates C-? on both strands, and protects the DNA from cleavage by the Bsp6I endonuclease. This Bacillus sp. (strain RFL6) protein is Type II methyltransferase M.Bsp6I.